The chain runs to 703 residues: Phosphoribosylformylglycinamidine synthase subunit PurL (703 aa).

Residue H36 is part of the active site. Residues Y39 and K80 each contribute to the ATP site. E82 contacts Mg(2+). Substrate contacts are provided by residues 83–86 (SHNH) and R105. H84 serves as the catalytic Proton acceptor. A Mg(2+)-binding site is contributed by D106. Residue Q226 coordinates substrate. Residue D252 coordinates Mg(2+). Position 294–296 (294–296 (ETQ)) interacts with substrate. Positions 468 and 505 each coordinate ATP. Residue S508 coordinates substrate.

The protein belongs to the FGAMS family. As to quaternary structure, monomer. Part of the FGAM synthase complex composed of 1 PurL, 1 PurQ and 2 PurS subunits.

The protein resides in the cytoplasm. It carries out the reaction N(2)-formyl-N(1)-(5-phospho-beta-D-ribosyl)glycinamide + L-glutamine + ATP + H2O = 2-formamido-N(1)-(5-O-phospho-beta-D-ribosyl)acetamidine + L-glutamate + ADP + phosphate + H(+). It functions in the pathway purine metabolism; IMP biosynthesis via de novo pathway; 5-amino-1-(5-phospho-D-ribosyl)imidazole from N(2)-formyl-N(1)-(5-phospho-D-ribosyl)glycinamide: step 1/2. Part of the phosphoribosylformylglycinamidine synthase complex involved in the purines biosynthetic pathway. Catalyzes the ATP-dependent conversion of formylglycinamide ribonucleotide (FGAR) and glutamine to yield formylglycinamidine ribonucleotide (FGAM) and glutamate. The FGAM synthase complex is composed of three subunits. PurQ produces an ammonia molecule by converting glutamine to glutamate. PurL transfers the ammonia molecule to FGAR to form FGAM in an ATP-dependent manner. PurS interacts with PurQ and PurL and is thought to assist in the transfer of the ammonia molecule from PurQ to PurL. The chain is Phosphoribosylformylglycinamidine synthase subunit PurL from Sulfurisphaera tokodaii (strain DSM 16993 / JCM 10545 / NBRC 100140 / 7) (Sulfolobus tokodaii).